The primary structure comprises 454 residues: Diaminobutyrate--2-oxoglutarate aminotransferase (454 aa).

Lys287 is subject to N6-(pyridoxal phosphate)lysine.

The protein belongs to the class-III pyridoxal-phosphate-dependent aminotransferase family. It depends on pyridoxal 5'-phosphate as a cofactor.

It catalyses the reaction L-2,4-diaminobutanoate + 2-oxoglutarate = L-aspartate 4-semialdehyde + L-glutamate. The protein operates within amine and polyamine biosynthesis; 1,3-diaminopropane biosynthesis; 1,3-diaminopropane from L-aspartate 4-semialdehyde: step 1/2. This Haemophilus influenzae (strain ATCC 51907 / DSM 11121 / KW20 / Rd) protein is Diaminobutyrate--2-oxoglutarate aminotransferase (dat).